The primary structure comprises 295 residues: 15-cis-phytoene synthase (295 aa).

Belongs to the phytoene/squalene synthase family. Requires ATP as cofactor. Mn(2+) is required as a cofactor.

The enzyme catalyses 2 (2E,6E,10E)-geranylgeranyl diphosphate = 15-cis-phytoene + 2 diphosphate. Its pathway is carotenoid biosynthesis; phytoene biosynthesis. Its activity is regulated as follows. Significant inhibition is seen at GGPP concentrations above 100 uM. Its function is as follows. Involved in the biosynthesis of carotenoids. Catalyzes stereoselectively the condensation of two molecules of geranylgeranyl diphosphate (GGPP) to give prephytoene diphosphate (PPPP) and the subsequent rearrangement of the cyclopropylcarbinyl intermediate to yield 15-cis-phytoene. The sequence is that of 15-cis-phytoene synthase (crtB) from Enterobacter agglomerans (Erwinia herbicola).